The sequence spans 120 residues: Flagellar protein FliT (120 aa).

The interval 1–50 (MERHQHLLSEYQQILTLSEQMLMLATVENWNTLVDLEMTYLKAVENTANI) is required for homodimerization. The fliD binding stretch occupies residues 60 to 98 (LQELLRQKLRSILENEIEIKRLLQRRLDKLSELVGQSTR).

This sequence belongs to the FliT family. In terms of assembly, homodimer. Interacts with FliD and FlhC.

It localises to the cytoplasm. It is found in the cytosol. Functionally, dual-function protein that regulates the transcription of class 2 flagellar operons and that also acts as an export chaperone for the filament-capping protein FliD. As a transcriptional regulator, acts as an anti-FlhDC factor; it directly binds FlhC, thus inhibiting the binding of the FlhC/FlhD complex to class 2 promoters, resulting in decreased expression of class 2 flagellar operons. As a chaperone, effects FliD transition to the membrane by preventing its premature polymerization, and by directing it to the export apparatus. This is Flagellar protein FliT from Yersinia pestis (strain Pestoides F).